Consider the following 283-residue polypeptide: Plasma membrane ascorbate-dependent reductase CYBRD1 (283 aa).

The Cytoplasmic portion of the chain corresponds to 1-5; it reads MEGYK. Residues 6-30 traverse the membrane as a helical segment; it reads SFLVFLVSSLLLGFLGVIFTLVWVL. Residues 13 to 218 form the Cytochrome b561 domain; the sequence is SSLLLGFLGV…FGGLVVWMVT (206 aa). Residues 31-45 lie on the Extracellular side of the membrane; the sequence is HWREGLGWDGGAAEF. The helical transmembrane segment at 46–67 threads the bilayer; it reads NWHPVLVTSGFIFIQGIAIIVY. Heme b is bound by residues His48, Arg68, and Lys77. Residues 68 to 76 are Cytoplasmic-facing; sequence RLPWTWNCS. L-ascorbate contacts are provided by Lys77 and Lys81. The helical transmembrane segment at 77 to 103 threads the bilayer; the sequence is KLLMKFIHAGLHLTAFVFTIVALVAVF. His84 contributes to the heme b binding site. The Extracellular segment spans residues 104-116; that stretch reads DFHNAKNIPNMYS. His106 provides a ligand contact to Fe(3+). Heme b is bound by residues 113–116 and His118; that span reads NMYS. Residues 117 to 142 traverse the membrane as a helical segment; the sequence is LHSWIGLTVVILYALQLVLGVSIYLL. Over 143 to 149 the chain is Cytoplasmic; sequence PFARDTL. Arg150 contributes to the L-ascorbate binding site. A helical transmembrane segment spans residues 150-177; sequence RAALMPVHVYSGLLIFGTVIATALMGIT. Residues His157 and Glu178 each contribute to the heme b site. Over 178–195 the chain is Extracellular; it reads EKLIFSLKEPPYSKMPPE. Residues 196 to 220 traverse the membrane as a helical segment; it reads AIFVNTFGLIILVFGGLVVWMVTTP. Over 221–283 the chain is Cytoplasmic; sequence AWKRPREQEI…LDDAGQRSTM (63 aa). Lys223 provides a ligand contact to heme b. The segment at 234–263 is disordered; sequence NPTVSSPDGTEEGSTITDCSNTEKSDVELN. The span at 235-253 shows a compositional bias: polar residues; it reads PTVSSPDGTEEGSTITDCS. The span at 254 to 263 shows a compositional bias: basic and acidic residues; the sequence is NTEKSDVELN.

Homodimer. Requires heme b as cofactor.

It localises to the cell membrane. It is found in the apical cell membrane. It catalyses the reaction Fe(3+)(out) + L-ascorbate(in) = monodehydro-L-ascorbate radical(in) + Fe(2+)(out) + H(+). It carries out the reaction Cu(2+)(out) + L-ascorbate(in) = Cu(+)(out) + monodehydro-L-ascorbate radical(in) + H(+). The enzyme catalyses monodehydro-L-ascorbate radical(out) + L-ascorbate(in) = monodehydro-L-ascorbate radical(in) + L-ascorbate(out). Its function is as follows. Plasma membrane reductase that uses cytoplasmic ascorbate as an electron donor to reduce extracellular Fe(3+) into Fe(2+). It is also able to reduce extracellular monodehydro-L-ascorbate and may be involved in extracellular ascorbate regeneration. May also function as a cupric transmembrane reductase. This chain is Plasma membrane ascorbate-dependent reductase CYBRD1 (cybrd1), found in Xenopus tropicalis (Western clawed frog).